Reading from the N-terminus, the 101-residue chain is Large ribosomal subunit protein bL28 (101 aa).

This sequence belongs to the bacterial ribosomal protein bL28 family.

This is Large ribosomal subunit protein bL28 from Methylorubrum extorquens (strain CM4 / NCIMB 13688) (Methylobacterium extorquens).